The sequence spans 158 residues: Non-secretory ribonuclease (158 aa).

The N-terminal stretch at 1–27 (MVPKLFTSQICVLLLFGLLSVEVSLQV) is a signal peptide. Tryptophan 34 carries a C-linked (Man) tryptophan glycan. Catalysis depends on histidine 42, which acts as the Proton acceptor. Cystine bridges form between cysteine 50/cysteine 110, cysteine 64/cysteine 121, cysteine 82/cysteine 136, and cysteine 89/cysteine 98. The residue at position 60 (tyrosine 60) is a 3'-nitrotyrosine. 65-69 (KNQNT) lines the substrate pocket. Asparagine 86, asparagine 92, and asparagine 111 each carry an N-linked (GlcNAc...) asparagine glycan. Histidine 153 functions as the Proton donor in the catalytic mechanism.

It belongs to the pancreatic ribonuclease family. In terms of assembly, interacts with and forms a tight 1:1 complex with RNH1. Dimerization of two such complexes may occur.

It is found in the lysosome. Its subcellular location is the cytoplasmic granule. It catalyses the reaction an [RNA] containing cytidine + H2O = an [RNA]-3'-cytidine-3'-phosphate + a 5'-hydroxy-ribonucleotide-3'-[RNA].. The catalysed reaction is an [RNA] containing uridine + H2O = an [RNA]-3'-uridine-3'-phosphate + a 5'-hydroxy-ribonucleotide-3'-[RNA].. In terms of biological role, this is a non-secretory ribonuclease. It is a pyrimidine specific nuclease with a slight preference for U. Cytotoxin and helminthotoxin. Possesses a wide variety of biological activities. In Saguinus oedipus (Cotton-top tamarin), this protein is Non-secretory ribonuclease (RNASE2).